The primary structure comprises 404 residues: Tryptophan synthase beta chain (404 aa).

K98 carries the post-translational modification N6-(pyridoxal phosphate)lysine.

Belongs to the TrpB family. Tetramer of two alpha and two beta chains. Requires pyridoxal 5'-phosphate as cofactor.

The catalysed reaction is (1S,2R)-1-C-(indol-3-yl)glycerol 3-phosphate + L-serine = D-glyceraldehyde 3-phosphate + L-tryptophan + H2O. Its pathway is amino-acid biosynthesis; L-tryptophan biosynthesis; L-tryptophan from chorismate: step 5/5. The beta subunit is responsible for the synthesis of L-tryptophan from indole and L-serine. This Rhodopseudomonas palustris (strain BisB5) protein is Tryptophan synthase beta chain.